Consider the following 379-residue polypeptide: Stimulator of interferon genes protein (379 aa).

A run of 3 helical transmembrane segments spans residues 20 to 40 (VAAFVLLIVCLAALWKLGEPS), 87 to 107 (ACLGCPIRYGAVLLLSCYFYV), and 115 to 135 (LPLTWMLAHLGLSEALNILLG). Residues Cys88 and Cys91 are each lipidated (S-palmitoyl cysteine). The cyclic dinucleotide-binding domain (CBD) stretch occupies residues 153 to 340 (FNVAHGLAWS…KHLRQEEREE (188 aa)). Residues Ser162, Tyr167, Arg238, and Thr263 each contribute to the 2',3'-cGAMP site. 3',3'-c-di-GMP-binding positions include Ser162, Tyr167, 238–241 (RVYT), and Thr263. Positions 167, 238, and 263 each coordinate 2',3'-cUAMP. The segment at 340 to 379 (EVTMGTAGTFVAPGSSTLHQEPELLISGMDQPLPLRTDIF) is C-terminal tail (CTT). Ser355 carries the post-translational modification Phosphoserine. A Phosphothreonine modification is found at Thr356. Positions 363-366 (LLIS) match the pLxIS motif motif. Ser366 carries the phosphoserine; by TBK1 modification.

This sequence belongs to the STING family. Homodimer; forms a homodimer in absence of cyclic nucleotide (c-di-GMP or cGAMP). Homotetramer; in presence of cyclic nucleotide (c-di-GMP or cGAMP), forms tetramers and higher-order oligomers through side-by-side packing. Interacts (when phosphorylated) with IRF3; following activation and phosphorylation on the pLxIS motif by TBK1, recruits IRF3. Interacts with TBK1; when homodimer, leading to subsequent production of IFN-beta. Interacts (via transmembrane domain) with TMEM203. Phosphorylation by TBK1 leads to activation and production of IFN-beta. Following cyclic nucleotide (c-di-GMP or cGAMP)-binding, activation and translocation from the endoplasmic reticulum, STING1 is phosphorylated by TBK1 at Ser-366 in the pLxIS motif. The phosphorylated pLxIS motif constitutes an IRF3-binding motif, leading to recruitment of the transcription factor IRF3 to induce type-I interferons and other cytokines. In contrast, lacks phosphorylation site at position 358, leading to reduced production of type-I interferons and other cytokines.

Its subcellular location is the endoplasmic reticulum membrane. The protein resides in the cytoplasm. It localises to the perinuclear region. It is found in the endoplasmic reticulum-Golgi intermediate compartment membrane. The protein localises to the golgi apparatus membrane. Its subcellular location is the cytoplasmic vesicle. The protein resides in the autophagosome membrane. It localises to the mitochondrion outer membrane. It is found in the cell membrane. It carries out the reaction H(+)(in) = H(+)(out). Its function is as follows. Facilitator of innate immune signaling that acts as a sensor of cytosolic DNA from bacteria and viruses and promotes low production of type I interferon (IFN-alpha and IFN-beta). Compared to other mammals, STING1-dependent type I interferon induction is strongly reduced in bats, suggesting that the cGAS-STING pathway promotes a limited inflammatory response. Innate immune response is triggered in response to non-CpG double-stranded DNA from viruses and bacteria delivered to the cytoplasm. Acts by binding cyclic dinucleotides: recognizes and binds cyclic di-GMP (c-di-GMP), a second messenger produced by bacteria, cyclic UMP-AMP (2',3'-cUAMP), and cyclic GMP-AMP (cGAMP), a messenger produced by CGAS in response to DNA virus in the cytosol. Upon binding to c-di-GMP, cUAMP or cGAMP, STING1 oligomerizes, translocates from the endoplasmic reticulum and is phosphorylated by TBK1 on the pLxIS motif, leading to recruitment and subsequent activation of the transcription factor IRF3 to induce expression of type I interferon and exert a potent anti-viral state. In addition to promote the production of type I interferons, plays a direct role in autophagy. Following cGAMP-binding, STING1 buds from the endoplasmic reticulum into COPII vesicles, which then form the endoplasmic reticulum-Golgi intermediate compartment (ERGIC). The ERGIC serves as the membrane source for WIPI2 recruitment and LC3 lipidation, leading to formation of autophagosomes that target cytosolic DNA or DNA viruses for degradation by the lysosome. Promotes autophagy by acting as a proton channel that directs proton efflux from the Golgi to facilitate MAP1LC3B/LC3B lipidation. The autophagy- and interferon-inducing activities can be uncoupled and autophagy induction is independent of TBK1 phosphorylation. The polypeptide is Stimulator of interferon genes protein (Eidolon helvum (Straw-colored fruit bat)).